The chain runs to 367 residues: Aminomethyltransferase (367 aa).

Belongs to the GcvT family. The glycine cleavage system is composed of four proteins: P, T, L and H.

It catalyses the reaction N(6)-[(R)-S(8)-aminomethyldihydrolipoyl]-L-lysyl-[protein] + (6S)-5,6,7,8-tetrahydrofolate = N(6)-[(R)-dihydrolipoyl]-L-lysyl-[protein] + (6R)-5,10-methylene-5,6,7,8-tetrahydrofolate + NH4(+). The glycine cleavage system catalyzes the degradation of glycine. This chain is Aminomethyltransferase, found in Lysinibacillus sphaericus (strain C3-41).